Here is a 386-residue protein sequence, read N- to C-terminus: MLTSPLSPFEHEDSNLLLSAEQLTQYGAFWTAKEISQQPKMWRKVSEQHSDNRTIAAWLTPILAKPQLRIILTGAGTSAYIGDVLAAHIQQHLPLATQQVEAISTTDIVSHPELYLRGNIPTLLISYGRSGNSPESMAAVELAEQLVDDCYHLAITCNGQGKLANYCADKSHCYLYKLPDETHDVSFAMTSSFTCMYLATLLIFAPNSQALMQCIEMAEHILTERLADIRLQSEQPSKRVVFLGGGPLKAIAQEAALKYLELTAGQVVSAFESPLGFRHGPKSLVDSHTQVLVMMSSDPYTRQYDNDLIQELKRDNQALSVLTLSEELLTGSSGLNEVWLGLPFILWCQILAIYKAIQLKVSPDNPCPTGQVNRVVQGVNVYPFVK.

2 SIS domains span residues 59–217 and 222–366; these read LTPI…CIEM and LTER…PDNP.

It belongs to the SIS family. AgaS subfamily.

It is found in the cytoplasm. The catalysed reaction is D-galactosamine 6-phosphate + H2O = D-tagatopyranose 1-phosphate + NH4(+). The enzyme catalyses alpha-D-glucosamine 6-phosphate + H2O = beta-D-fructose 6-phosphate + NH4(+). Its function is as follows. Involved in the pathway of N-acetyl-D-galactosamine degradation. Catalyzes the conversion of D-galactosamine 6-phosphate (GalN-6-P) to D-tagatofuranose 6-phosphate (Tag-6-P). It can also catalyze the conversion of D-glucosamine 6-phosphate. This Shewanella sp. (strain ANA-3) protein is D-galactosamine-6-phosphate deaminase AgaS.